Consider the following 404-residue polypeptide: Cysteine desulfurase IscS (404 aa).

Pyridoxal 5'-phosphate is bound by residues A75–T76, N155, Q183, and S203–H205. An N6-(pyridoxal phosphate)lysine modification is found at K206. T243 is a pyridoxal 5'-phosphate binding site. The active-site Cysteine persulfide intermediate is C328. A [2Fe-2S] cluster-binding site is contributed by C328.

It belongs to the class-V pyridoxal-phosphate-dependent aminotransferase family. NifS/IscS subfamily. In terms of assembly, homodimer. Forms a heterotetramer with IscU, interacts with other sulfur acceptors. Pyridoxal 5'-phosphate is required as a cofactor.

The protein localises to the cytoplasm. The catalysed reaction is (sulfur carrier)-H + L-cysteine = (sulfur carrier)-SH + L-alanine. Its pathway is cofactor biosynthesis; iron-sulfur cluster biosynthesis. Functionally, master enzyme that delivers sulfur to a number of partners involved in Fe-S cluster assembly, tRNA modification or cofactor biosynthesis. Catalyzes the removal of elemental sulfur atoms from cysteine to produce alanine. Functions as a sulfur delivery protein for Fe-S cluster synthesis onto IscU, an Fe-S scaffold assembly protein, as well as other S acceptor proteins. The polypeptide is Cysteine desulfurase IscS (Buchnera aphidicola subsp. Schizaphis graminum (strain Sg)).